The primary structure comprises 236 residues: Bax inhibitor 1 (236 aa).

Topologically, residues 1 to 29 (MNIFDRKINFDALFKFSHITPSTQQHLKK) are cytoplasmic. A Glycyl lysine isopeptide (Lys-Gly) (interchain with G-Cter in ubiquitin) cross-link involves residue K7. The chain crosses the membrane as a helical span at residues 30 to 50 (VYASFALCMFVAAAGAYIHVV). Residues 51–52 (TH) lie on the Lumenal side of the membrane. Residues 53–73 (FIQAGLLSALGSLGLMIWLMA) traverse the membrane as a helical segment. The Cytoplasmic portion of the chain corresponds to 74 to 86 (TPHSHETEQKRLG). A helical transmembrane segment spans residues 87–107 (LLAGFAFLTGVGLGPALDLCI). At 108 to 112 (AINPS) the chain is on the lumenal side. A helical membrane pass occupies residues 113–133 (ILPTAFMGTAMIFTCFTLSAL). At 134-139 (YARRRS) the chain is on the cytoplasmic side. The helical transmembrane segment at 140–160 (YLFLGGILMSAMSLMLLSSLG) threads the bilayer. At 161 to 166 (NLFFGS) the chain is on the lumenal side. The chain crosses the membrane as a helical span at residues 167–187 (VWLFQANLYMGLVVMCGFVLF). Topologically, residues 188-206 (DTQLIIEKAENGDKDYIWH) are cytoplasmic. An intramembrane region (helical) is located at residues 207–227 (CVDLFLDFVTLFRKLMMILAM). The Cytoplasmic portion of the chain corresponds to 228–236 (NEKDKKKKK).

The protein belongs to the BI1 family. Interacts with BCL2 and BCL2L1. Interacts with ERN1. In terms of processing, ubiquitinated by BFAR, leading to proteasomal degradation.

Its subcellular location is the endoplasmic reticulum membrane. Endoplasmic reticulum (ER)-resident protein that confers cellular protection as an anti-apoptotic protein by limiting multiple stress-inducing pathways surrounding the endoplasmic reticulum and mitochondria. Inhibits the activities of the key sensor for the endoplasmic reticulum unfolded protein response IRE1alpha/ERN1 both directly and by blocking BAX/BAK binding. Modulates ER calcium homeostasis by acting as a calcium-leak channel. Negatively regulates autophagy and autophagosome formation, especially during periods of nutrient deprivation, and reduces cell survival during starvation. The chain is Bax inhibitor 1 (TMBIM6) from Bos taurus (Bovine).